A 439-amino-acid chain; its full sequence is Xylose isomerase (439 aa).

Catalysis depends on residues H101 and D104. Mg(2+)-binding residues include E232, E268, H271, D296, D307, D309, and D339.

The protein belongs to the xylose isomerase family. As to quaternary structure, homotetramer. It depends on Mg(2+) as a cofactor.

Its subcellular location is the cytoplasm. The catalysed reaction is alpha-D-xylose = alpha-D-xylulofuranose. This Yersinia pseudotuberculosis serotype O:1b (strain IP 31758) protein is Xylose isomerase.